We begin with the raw amino-acid sequence, 565 residues long: Sulfite reductase [NADPH] hemoprotein beta-component (565 aa).

[4Fe-4S] cluster is bound by residues Cys429, Cys435, Cys474, and Cys478. Siroheme is bound at residue Cys478.

The protein belongs to the nitrite and sulfite reductase 4Fe-4S domain family. As to quaternary structure, alpha(8)-beta(8). The alpha component is a flavoprotein, the beta component is a hemoprotein. Siroheme serves as cofactor. Requires [4Fe-4S] cluster as cofactor.

The enzyme catalyses hydrogen sulfide + 3 NADP(+) + 3 H2O = sulfite + 3 NADPH + 4 H(+). It functions in the pathway sulfur metabolism; hydrogen sulfide biosynthesis; hydrogen sulfide from sulfite (NADPH route): step 1/1. Functionally, component of the sulfite reductase complex that catalyzes the 6-electron reduction of sulfite to sulfide. This is one of several activities required for the biosynthesis of L-cysteine from sulfate. This is Sulfite reductase [NADPH] hemoprotein beta-component from Shewanella halifaxensis (strain HAW-EB4).